Consider the following 28-residue polypeptide: Seed allergenic protein 1 (28 aa).

The segment at 1 to 28 (VTXEEGXYSISDQSKVGEQXIRSPDREM) is disordered.

The protein is Seed allergenic protein 1 of Prunus dulcis (Almond).